A 243-amino-acid chain; its full sequence is Geranylgeranylglyceryl phosphate synthase (243 aa).

Asp22 and Ser51 together coordinate Mg(2+). Sn-glycerol 1-phosphate-binding positions include Tyr169–Gly175, Gly200–Gly201, and Gly222–Thr223.

It belongs to the GGGP/HepGP synthase family. Group II subfamily. It depends on Mg(2+) as a cofactor.

The protein resides in the cytoplasm. The enzyme catalyses sn-glycerol 1-phosphate + (2E,6E,10E)-geranylgeranyl diphosphate = sn-3-O-(geranylgeranyl)glycerol 1-phosphate + diphosphate. Its pathway is membrane lipid metabolism; glycerophospholipid metabolism. Functionally, prenyltransferase that catalyzes the transfer of the geranylgeranyl moiety of geranylgeranyl diphosphate (GGPP) to the C3 hydroxyl of sn-glycerol-1-phosphate (G1P). This reaction is the first ether-bond-formation step in the biosynthesis of archaeal membrane lipids. In Methanosphaera stadtmanae (strain ATCC 43021 / DSM 3091 / JCM 11832 / MCB-3), this protein is Geranylgeranylglyceryl phosphate synthase.